A 318-amino-acid polypeptide reads, in one-letter code: Cis-3-alkyl-4-alkyloxetan-2-one decarboxylase (318 aa).

Residues 30–275 (PVVMVHGNPS…ADCGHYILED (246 aa)) enclose the AB hydrolase-1 domain.

It belongs to the AB hydrolase superfamily.

It carries out the reaction a cis-3-alkyl-4-alkyloxetan-2-one = a cis-alkene + CO2. In terms of biological role, involved in olefin biosynthesis. Catalyzes the elimination of carbon dioxide from beta-lactones to form the final olefin product. The S.oneidensis oleABCD genes produce 3,6,9,12,15,19,22,25,28-hentriacontanonaene, which may aid the cells in adapting to a sudden drop in temperature. The chain is Cis-3-alkyl-4-alkyloxetan-2-one decarboxylase from Shewanella oneidensis (strain ATCC 700550 / JCM 31522 / CIP 106686 / LMG 19005 / NCIMB 14063 / MR-1).